Reading from the N-terminus, the 156-residue chain is UPF0266 membrane protein NT01EI_1718 (156 aa).

The next 3 helical transmembrane spans lie at 6–26 (IALLVFIVLFLLYAIYDEAIM), 46–63 (DSLIFIGLLAILVYRNIS), and 67–87 (APFTTWLLATLMVVAIYIFYL).

It belongs to the UPF0266 family.

The protein localises to the cell inner membrane. The chain is UPF0266 membrane protein NT01EI_1718 from Edwardsiella ictaluri (strain 93-146).